Consider the following 202-residue polypeptide: Transmembrane 4 L6 family member 4 (202 aa).

Over 1–9 (MCTGGCARC) the chain is Cytoplasmic. The helical transmembrane segment at 10–30 (LGGTLIPLAVFGLLANILLFF) threads the bilayer. Topologically, residues 31 to 48 (PGGKVVNDKSHLSDEVWY) are extracellular. A helical transmembrane segment spans residues 49-69 (FGGILGSGVLMIFPALVFLGL). Topologically, residues 70 to 93 (QNNDCCGCCGNEGCGKRFAMFTST) are cytoplasmic. A helical membrane pass occupies residues 94–114 (LFAVIGFLGAGYSFIVSAVSI). Topologically, residues 115 to 158 (NKGPKCFMANGTWGYPFHDGDYLKDQALWSECEEPRDVVPWNLT) are extracellular. Asn-156 carries an N-linked (GlcNAc...) asparagine glycan. A helical membrane pass occupies residues 159–179 (LFSILLVIGGIQMVLCAIQVI). Residues 180–202 (NGLLGTLCGDCQCCGCCGGDGPV) lie on the Cytoplasmic side of the membrane.

This sequence belongs to the L6 tetraspanin family.

The protein resides in the membrane. Its function is as follows. Regulates the adhesive and proliferative status of intestinal epithelial cells. Can mediate density-dependent cell proliferation. This chain is Transmembrane 4 L6 family member 4 (Tm4sf4), found in Mus musculus (Mouse).